The chain runs to 366 residues: 4-hydroxy-3-methylbut-2-en-1-yl diphosphate synthase (flavodoxin) (366 aa).

Residues cysteine 270, cysteine 273, cysteine 305, and glutamate 312 each coordinate [4Fe-4S] cluster.

The protein belongs to the IspG family. [4Fe-4S] cluster serves as cofactor.

It carries out the reaction (2E)-4-hydroxy-3-methylbut-2-enyl diphosphate + oxidized [flavodoxin] + H2O + 2 H(+) = 2-C-methyl-D-erythritol 2,4-cyclic diphosphate + reduced [flavodoxin]. Its pathway is isoprenoid biosynthesis; isopentenyl diphosphate biosynthesis via DXP pathway; isopentenyl diphosphate from 1-deoxy-D-xylulose 5-phosphate: step 5/6. In terms of biological role, converts 2C-methyl-D-erythritol 2,4-cyclodiphosphate (ME-2,4cPP) into 1-hydroxy-2-methyl-2-(E)-butenyl 4-diphosphate. This Wigglesworthia glossinidia brevipalpis protein is 4-hydroxy-3-methylbut-2-en-1-yl diphosphate synthase (flavodoxin).